The primary structure comprises 269 residues: 3-methyl-2-oxobutanoate hydroxymethyltransferase (269 aa).

Asp-48 and Asp-87 together coordinate Mg(2+). 3-methyl-2-oxobutanoate is bound by residues 48–49, Asp-87, and Lys-116; that span reads DS. Glu-118 contributes to the Mg(2+) binding site. The Proton acceptor role is filled by Glu-185.

Belongs to the PanB family. In terms of assembly, homodecamer; pentamer of dimers. Mg(2+) is required as a cofactor.

The protein resides in the cytoplasm. It carries out the reaction 3-methyl-2-oxobutanoate + (6R)-5,10-methylene-5,6,7,8-tetrahydrofolate + H2O = 2-dehydropantoate + (6S)-5,6,7,8-tetrahydrofolate. It functions in the pathway cofactor biosynthesis; (R)-pantothenate biosynthesis; (R)-pantoate from 3-methyl-2-oxobutanoate: step 1/2. In terms of biological role, catalyzes the reversible reaction in which hydroxymethyl group from 5,10-methylenetetrahydrofolate is transferred onto alpha-ketoisovalerate to form ketopantoate. This chain is 3-methyl-2-oxobutanoate hydroxymethyltransferase, found in Campylobacter curvus (strain 525.92).